The sequence spans 357 residues: Histidine biosynthesis bifunctional protein HisB (357 aa).

Residues 1-167 form a histidinol-phosphatase region; it reads MNDKILFIDR…IHKYLMQNSH (167 aa). Residue D9 is the Nucleophile of the active site. Mg(2+)-binding residues include D9 and D11. D11 (proton donor) is an active-site residue. C93, H95, C101, and C103 together coordinate Zn(2+). D130 is a Mg(2+) binding site. The interval 168 to 357 is imidazoleglycerol-phosphate dehydratase; the sequence is RVAHIQRITN…QIPSSKGILL (190 aa).

The protein in the N-terminal section; belongs to the histidinol-phosphatase family. This sequence in the C-terminal section; belongs to the imidazoleglycerol-phosphate dehydratase family. Mg(2+) serves as cofactor. Requires Zn(2+) as cofactor.

The protein resides in the cytoplasm. It catalyses the reaction D-erythro-1-(imidazol-4-yl)glycerol 3-phosphate = 3-(imidazol-4-yl)-2-oxopropyl phosphate + H2O. The enzyme catalyses L-histidinol phosphate + H2O = L-histidinol + phosphate. The protein operates within amino-acid biosynthesis; L-histidine biosynthesis; L-histidine from 5-phospho-alpha-D-ribose 1-diphosphate: step 6/9. Its pathway is amino-acid biosynthesis; L-histidine biosynthesis; L-histidine from 5-phospho-alpha-D-ribose 1-diphosphate: step 8/9. This Blochmanniella floridana protein is Histidine biosynthesis bifunctional protein HisB.